Reading from the N-terminus, the 570-residue chain is 2-isopropylmalate synthase (570 aa).

Positions 31–305 (PIWMSTDLRD…DPELDFSHIN (275 aa)) constitute a Pyruvate carboxyltransferase domain. Residues Asp40, His244, His246, and Asn280 each contribute to the Mg(2+) site. Residues 437–570 (SDGAIGYVSH…RRSSAQATVA (134 aa)) are regulatory domain.

Belongs to the alpha-IPM synthase/homocitrate synthase family. LeuA type 2 subfamily. Homodimer. The cofactor is Mg(2+).

The protein localises to the cytoplasm. It carries out the reaction 3-methyl-2-oxobutanoate + acetyl-CoA + H2O = (2S)-2-isopropylmalate + CoA + H(+). The protein operates within amino-acid biosynthesis; L-leucine biosynthesis; L-leucine from 3-methyl-2-oxobutanoate: step 1/4. In terms of biological role, catalyzes the condensation of the acetyl group of acetyl-CoA with 3-methyl-2-oxobutanoate (2-ketoisovalerate) to form 3-carboxy-3-hydroxy-4-methylpentanoate (2-isopropylmalate). The sequence is that of 2-isopropylmalate synthase from Ralstonia pickettii (strain 12J).